Reading from the N-terminus, the 158-residue chain is Transcription elongation factor GreA (158 aa).

It belongs to the GreA/GreB family.

Its function is as follows. Necessary for efficient RNA polymerase transcription elongation past template-encoded arresting sites. The arresting sites in DNA have the property of trapping a certain fraction of elongating RNA polymerases that pass through, resulting in locked ternary complexes. Cleavage of the nascent transcript by cleavage factors such as GreA or GreB allows the resumption of elongation from the new 3'terminus. GreA releases sequences of 2 to 3 nucleotides. This chain is Transcription elongation factor GreA, found in Rhizobium etli (strain CIAT 652).